The chain runs to 109 residues: Nucleoid-associated protein MS1507 (109 aa).

The segment at 1-21 (MFGKGGLGNLMKQAQQMQERM) is disordered.

It belongs to the YbaB/EbfC family. As to quaternary structure, homodimer.

It localises to the cytoplasm. Its subcellular location is the nucleoid. Binds to DNA and alters its conformation. May be involved in regulation of gene expression, nucleoid organization and DNA protection. The chain is Nucleoid-associated protein MS1507 from Mannheimia succiniciproducens (strain KCTC 0769BP / MBEL55E).